A 28-amino-acid chain; its full sequence is Dermaseptin-2 (28 aa).

A Glutamine amide modification is found at glutamine 28.

Belongs to the frog skin active peptide (FSAP) family. Dermaseptin subfamily. In terms of tissue distribution, expressed by the skin glands.

It is found in the secreted. Its function is as follows. Antimicrobial peptide with activity against the Gram-positive bacterium S.aureus, and the Gram-negative bacteria E.coli and P.aeruginosa. Probably acts by disturbing membrane functions with its amphipathic structure. Has an activity of stimulation of insulin release, which may protect the species from being eaten by predators by causing fatal hypoglycemia. Has hemolytic activity (60% hemolysis at 128 ug/ml). This Phyllomedusa tarsius (Brownbelly leaf frog) protein is Dermaseptin-2.